A 216-amino-acid polypeptide reads, in one-letter code: MASHLASIYGTEQDKVNCSFYYKIGACRHGERCSRKHVKPNFSQTILCPNMYKNPIHEPNGKKFTQRELAEQFDAFYEDMFCEFSKYGEVEQLVVCDNVGDHLVGNVYVRFKYEESAQNAIDDLNSRWYSQRPVYAELSPVTDFREACCRQHETSECQRGGLCNFMHAKKPSPQLLRDLVLAQRKYLALNAAEEMKKEPNSDSTNRWVSVTAERKN.

Residues 12–40 (EQDKVNCSFYYKIGACRHGERCSRKHVKP) form a C3H1-type 1 zinc finger. An RRM domain is found at 44 to 141 (QTILCPNMYK…RPVYAELSPV (98 aa)). The C3H1-type 2 zinc finger occupies 143-170 (DFREACCRQHETSECQRGGLCNFMHAKK). Positions 194–216 (EMKKEPNSDSTNRWVSVTAERKN) are disordered.

Forms a heterodimer with the U2AF large subunit. Can also form a homodimer. U2AF large subunit (U2AF59), U2AF small subunit (U2AF23) and SF1 (bpb1) interact to form a complex required for complex A formation. Interacts with cwf13.

It localises to the nucleus. Its function is as follows. Necessary for the splicing of pre-mRNA. The SF1-U2AF59-U2AF23 complex has a role in the recognition of the branch site (5'-UACUAAC-3'), the pyrimidine tract and the 3'-splice site at the 3'-end of introns. This chain is Splicing factor U2AF 23 kDa subunit, found in Schizosaccharomyces pombe (strain 972 / ATCC 24843) (Fission yeast).